Reading from the N-terminus, the 202-residue chain is Large ribosomal subunit protein bL17 (202 aa).

Residues 130–142 show a composition bias toward low complexity; it reads AAPAATAPAPVEE. The interval 130–202 is disordered; sequence AAPAATAPAP…TEESTEDDKA (73 aa). Acidic residues-rich tracts occupy residues 143–168 and 177–202; these read APAE…EASP and QPVE…DDKA.

Belongs to the bacterial ribosomal protein bL17 family. Part of the 50S ribosomal subunit. Contacts protein L32.

This chain is Large ribosomal subunit protein bL17, found in Nocardioides sp. (strain ATCC BAA-499 / JS614).